The sequence spans 218 residues: Pyridoxine/pyridoxamine 5'-phosphate oxidase (218 aa).

Residues 14–17 (RREY) and lysine 72 each bind substrate. FMN contacts are provided by residues 67 to 72 (RIVLLK), 82 to 83 (YT), arginine 88, lysine 89, and glutamine 111. Residues tyrosine 129, arginine 133, and serine 137 each coordinate substrate. FMN is bound by residues 146-147 (QS) and tryptophan 191. Substrate is bound at residue 197–199 (RLH). An FMN-binding site is contributed by arginine 201.

This sequence belongs to the pyridoxamine 5'-phosphate oxidase family. As to quaternary structure, homodimer. FMN serves as cofactor.

It catalyses the reaction pyridoxamine 5'-phosphate + O2 + H2O = pyridoxal 5'-phosphate + H2O2 + NH4(+). It carries out the reaction pyridoxine 5'-phosphate + O2 = pyridoxal 5'-phosphate + H2O2. Its pathway is cofactor metabolism; pyridoxal 5'-phosphate salvage; pyridoxal 5'-phosphate from pyridoxamine 5'-phosphate: step 1/1. It functions in the pathway cofactor metabolism; pyridoxal 5'-phosphate salvage; pyridoxal 5'-phosphate from pyridoxine 5'-phosphate: step 1/1. In terms of biological role, catalyzes the oxidation of either pyridoxine 5'-phosphate (PNP) or pyridoxamine 5'-phosphate (PMP) into pyridoxal 5'-phosphate (PLP). The chain is Pyridoxine/pyridoxamine 5'-phosphate oxidase from Enterobacter sp. (strain 638).